The primary structure comprises 1732 residues: Transient receptor potential cation channel subfamily M member 3 (1732 aa).

At 1–894 (MPGPWGTVYF…RKIYEFYNAP (894 aa)) the chain is on the cytoplasmic side. 5 calmodulin-binding regions span residues 41–64 (WTIRKLCHAAFLPSVRLLKAQKSW), 192–215 (NFELQPKLKQVFGKGLIKAAMTTG), 300–323 (TGKYGAEVKLRRQLEKHISLQKIN), 601–624 (RKRFRTLYHNLFGPKRPKALKLLG), and 793–816 (RKNSGLKVILGILLPPSILSLEFK). A required for the inhibitory action of G-beta/gamma-subunits of heterotrimeric G-proteins region spans residues 617–625 (PKALKLLGM). S796 contributes to the 1,2-dioctanoyl-sn-glycero-3-phospho-(1D-myo-inositol-4,5-bisphosphate) binding site. Residues 829–851 (EIHLQEKEPEEPEKPTKEKDEED) form a disordered region. A compositionally biased stretch (basic and acidic residues) spans 831-847 (HLQEKEPEEPEKPTKEK). The chain crosses the membrane as a helical span at residues 895-918 (IVKFWFYTLAYIGYLMLFNYIVLV). At 919–925 (KMERWPS) the chain is on the extracellular side. Residues 926-948 (TQEWIVISYIFTLGIEKMREILM) form a helical membrane-spanning segment. Topologically, residues 949-964 (SEPGKLLQKVKVWLQE) are cytoplasmic. The chain crosses the membrane as a helical span at residues 965–985 (YWNVTDLIAILLFSVGMILRL). The Extracellular portion of the chain corresponds to 986–989 (QDQP). A helical transmembrane segment spans residues 990–1013 (FRSDGRVIYCVNIIYWYIRLLDIF). Over 1014 to 1028 (GVNKYLGPYVMMIGK) the chain is Cytoplasmic. 1,2-dioctanoyl-sn-glycero-3-phospho-(1D-myo-inositol-4,5-bisphosphate)-binding residues include K1017 and Y1018. A helical transmembrane segment spans residues 1029–1056 (MMIDMMYFVIIMLVVLMSFGVARQAILF). Topologically, residues 1057 to 1073 (PNEEPSWKLAKNIFYMP) are extracellular. Positions 1074–1101 (YWMIYGEVFADQIDPPCGQNETREDGKT) form an intramembrane region, pore-forming. The Extracellular segment spans residues 1102-1111 (IQLPPCKTGA). Residues 1112 to 1137 (WIVPAIMACYLLVANILLVNLLIAVF) form a helical membrane-spanning segment. The Cytoplasmic segment spans residues 1138–1732 (NNTFFEVKSI…AFHSFESKHN (595 aa)). A disordered region spans residues 1610–1732 (EREAELSHPS…AFHSFESKHN (123 aa)). Composition is skewed to polar residues over residues 1635 to 1653 (PISSQEAENADRTLSNNIT) and 1690 to 1701 (NTASLRNPFQRS).

The protein belongs to the transient receptor (TC 1.A.4) family. LTrpC subfamily. TRPM3 sub-subfamily. In terms of assembly, homotetramer. Interacts with TRPM1; the interaction results in the formation of a heteromultimeric cation channel complex that are functionally different from the homomeric channels.

The protein resides in the cell membrane. It catalyses the reaction Ca(2+)(in) = Ca(2+)(out). It carries out the reaction Mn(2+)(in) = Mn(2+)(out). The catalysed reaction is Zn(2+)(in) = Zn(2+)(out). The enzyme catalyses Mg(2+)(in) = Mg(2+)(out). It catalyses the reaction Na(+)(in) = Na(+)(out). Its activity is regulated as follows. Activated by the neurosteroid pregnelonone sulfate (PregS). PregS activates the channel by shifting its current-voltage activation curve toward more negative membrane potentials and also potentiates temperature-induced activation. Activated by heat. Intracellular Ca(2+) inhibits TRPM3 probably via interaction with Ca(2+)/calmodulin. Intracellular Mg(2+) inhibits TRPM3 activity. Both intracellular and extracellular protons block TRPM3 through propable binding sites in the pore region. Positively regulated by phosphoinositide phosphoinositol 4,5-biphosphate (PI(4,5)P2). Strongly inhibited by activation of G(i)-coupled receptors via direct binding with G-beta/gamma-subunits of heterotrimeric G-proteins. With respect to regulation, insensitive to pregnenolone sulfate (PregS) or heat. Not inhibited by G-beta/gamma-subunits of heterotrimeric G-proteins. Constitutively active, non-selective divalent cation-conducting channel that is permeable to Ca(2+), Mn(2+), and Mg(2+), with a high permeability for Ca(2+). However, can be enhanced by increasing temperature and by ligands, including the endogenous neurosteroid pregnenolone sulfate and sphingosine-1 and suppressed by intracellular Mg(2+). Implicated in a variety of cellular processes, including insulin/peptide secretion, vascular constriction and dilation, noxious heat sensing, inflammatory and spontaneous pain sensitivity. In neurons of the dorsal root ganglia, functions as thermosensitive channel for the detection of noxious heat and spontaneous pain. Suggested to function as an ionotropic steroid receptor in beta-cell, indeed pregnenolone sulfate leads to Ca(2+) influx and enhanced insulin secretion. Mediates Zn(2+) uptake into the lumen of pancreatic beta cell secretory granules, thereby regulating insulin secretion. Forms heteromultimeric ion channels with TRPM1 which are permeable for Ca(2+) and Zn(2+) ions. Exists as multiple splice variants which differ significantly in their biophysical properties. Functionally, displays strongly reduced permeability for divalent cations and high selectivity toward monovalent cations. In terms of biological role, no channel activity. This Mus musculus (Mouse) protein is Transient receptor potential cation channel subfamily M member 3.